The chain runs to 571 residues: Sporulation-specific protein 1 (571 aa).

Disordered stretches follow at residues 1-53, 67-133, and 482-501; these read MRSS…EEDV, MTAF…PYRQ, and KEAK…SQPE. Residues 23-37 show a composition bias toward basic residues; sequence SKQKKPTKFRERMRR. Polar residues-rich tracts occupy residues 67 to 86, 95 to 121, and 486 to 499; these read MTAF…NNFF, PVQS…QNPK, and NISS…SISQ. 2 coiled-coil regions span residues 469–486 and 542–566; these read DQLV…EAKN and ESAS…DENV.

Interacts directly with ADY3. Probable component of a spindle pole body (SPB) complex composed of ADY3, SSP1, DON1, MPC54, SPO21/MPC70, NUD1 and CNM67. In terms of processing, phosphorylated.

Its subcellular location is the prospore membrane. Functionally, involved in the pathway that organizes the shaping and sizing of the prospore membrane (PSM) during sporulation. May be required for the formation of ADY3 and DON1-containing protein coats at the leading edge of the PSMs during meiosis II. The polypeptide is Sporulation-specific protein 1 (SSP1) (Saccharomyces cerevisiae (strain ATCC 204508 / S288c) (Baker's yeast)).